Consider the following 223-residue polypeptide: FAD-dependent monooxygenase imqC (223 aa).

Residues 139-141 (RFY), Tyr-189, and Asp-210 each bind FAD.

It belongs to the PheA/TfdB FAD monooxygenase family.

It functions in the pathway secondary metabolite biosynthesis. FAD-dependent monooxygenase; part of the gene cluster that mediates the biosynthesis of imizoquins A to D, tripeptide-derived alkaloids that serve a protective role against oxidative stress that are essential for normal germination. ImqB is a canonical three-module NRPS that assembles the tripeptide backbone of the imizoquins via condensation of Trp, Tyr, and Leu-derived precursors. N-methylation by imqF and phenol oxidation by imqC, followed by cyclization via the FAD-dependent oxidase imqH carry out the three-step transformation of L-tyrosine into tetrahydroisoquinoline. Importantly, this sequence requires the presence of a free amine in the tyrosine moiety, indicating that isoquinoline formation occurs prior to peptide bond formation. The imidazolidin-4-one ring of imizoquins could form following additional oxidation of the methyl-derived bridgehead carbon by imqH. Lastly, O-methylation by imqG and leucine hydroxylation by imqE complete biosynthesis of the imizoquins. This Aspergillus flavus (strain ATCC 200026 / FGSC A1120 / IAM 13836 / NRRL 3357 / JCM 12722 / SRRC 167) protein is FAD-dependent monooxygenase imqC.